We begin with the raw amino-acid sequence, 378 residues long: MNLFGKVVSFSRGKLNNDTQRVTAWQNEAVEYTSAFVTNIHNKIANEITKVEFNHVKYKKSDVGSDTLISMAGSDLDEVLNWSPKGERNSMDFWRKVIKKLLRAPYVDLYAVFDDNTGELLDLLFADDKKEYKPEELVRLTSPFYINEDTSILDNALASIQTKLEQGKLRGLLKINAFLDIDNTQEYREKALTTIKNMQEGSSYNGLTPVDNKTEIVELKKDYSVLNKDEIDLIKSELLTGYFMNENILLGTASQEQQIYFYNSTIIPLLIQLEKELTYKLISTNRRRVVKGNLYYERIIVDNQLFKFATLKELIDLYHENINGPIFTQNQLLVKMGEQPIEGGDVYIANLNAVAVKNLSDLQGSRKDVTSTDETNNQ.

This sequence belongs to the skunalikevirus portal protein family. In terms of assembly, homododecamer.

Its subcellular location is the virion. Forms the portal vertex of the capsid. This portal plays critical roles in head assembly, genome packaging, neck/tail attachment, and genome ejection. The portal protein multimerizes as a single ring-shaped homododecamer arranged around a central channel. Binds to the terminase subunits to form the packaging machine. Necessary to ensure correct procapsid size during capsid assembly. Once the capsid is packaged with the DNA, the terminase complex is substituted by the connector proteins gp15. This chain is Probable portal protein, found in Lactococcus phage p2 (Lactococcus lactis bacteriophage p2).